The following is a 393-amino-acid chain: Dual specificity mitogen-activated protein kinase kinase 1 (393 aa).

A disordered region spans residues 1 to 27; it reads MPKKKPTPIQLNPAPDGSAVNGTSSAE. One can recognise a Protein kinase domain in the interval 68-361; the sequence is FEKISELGAG…LKQLMVHAFI (294 aa). Residues 74 to 82, Lys-97, 143 to 146, and 150 to 153 contribute to the ATP site; these read LGAGNGGVV, MEHM, and SLDQ. Lys-97 lines the U0126 pocket. 144–146 contributes to the K-252a binding site; the sequence is EHM. Asp-190 (proton acceptor) is an active-site residue. ATP contacts are provided by residues 192-195 and Asp-208; that span reads KPSN. Ser-194 contributes to the K-252a binding site. 208–211 contacts U0126; that stretch reads DFGV. Ser-218 and Ser-222 each carry phosphoserine; by BRAF and RAF1. Residues 270–307 are RAF1-binding; sequence ELELMFGCQVEGDAAETPPRPRTPGRPLSSYGMDSRPP. Thr-286 is subject to Phosphothreonine. Thr-292 carries the phosphothreonine; by MAPK1 modification. Ser-298 is modified (phosphoserine; by PAK).

This sequence belongs to the protein kinase superfamily. STE Ser/Thr protein kinase family. MAP kinase kinase subfamily. As to quaternary structure, found in a complex with at least BRAF, HRAS, MAP2K1, MAPK3/ERK1 and RGS14. Forms a heterodimer with MAP2K2/MEK2. Forms heterodimers with KSR2 which further dimerize to form tetramers. Interacts with KSR1 or KSR2 and BRAF; the interaction with KSR1 or KSR2 mediates KSR1-BRAF or KSR2-BRAF dimerization. Interacts with ARBB2, LAMTOR3 and RAF1. Interacts with MAPK1/ERK2. Interacts with MORG1. Interacts with PPARG. Interacts with isoform 1 of VRK2. Interacts with SGK1. Interacts with BIRC6/bruce. Interacts with KAT7; the interaction promotes KAT7 phosphorylation. Interacts with RAF1 and NEK10; the interaction is required for ERK1/2-signaling pathway activation in response to UV irradiation. Interacts with TRAF3IP3. Interacts with MOS. (Microbial infection) Interacts with Yersinia YopJ. Post-translationally, phosphorylation at Ser-218 and Ser-222 by MAP kinase kinase kinases (BRAF or MEKK1) positively regulates kinase activity. Also phosphorylated at Thr-292 by MAPK1/ERK2 and at Ser-298 by PAK. MAPK1/ERK2 phosphorylation of Thr-292 occurs in response to cellular adhesion and leads to inhibition of Ser-298 phosphorylation by PAK. Autophosphorylated at Ser-218 and Ser-222, autophosphosphorylation is promoted by NEK10 following UV irradiation. (Microbial infection) Acetylation by Yersinia YopJ prevents phosphorylation and activation, thus blocking the MAPK signaling pathway. In terms of tissue distribution, widely expressed, with extremely low levels in brain.

It is found in the cytoplasm. The protein resides in the cytoskeleton. Its subcellular location is the microtubule organizing center. It localises to the centrosome. The protein localises to the spindle pole body. It is found in the nucleus. The protein resides in the membrane. It carries out the reaction L-seryl-[protein] + ATP = O-phospho-L-seryl-[protein] + ADP + H(+). The catalysed reaction is L-threonyl-[protein] + ATP = O-phospho-L-threonyl-[protein] + ADP + H(+). The enzyme catalyses L-tyrosyl-[protein] + ATP = O-phospho-L-tyrosyl-[protein] + ADP + H(+). Its activity is regulated as follows. Ras proteins such as HRAS mediate the activation of RAF proteins such as RAF1 or BRAF which in turn activate extracellular signal-regulated kinases (ERK) through MAPK (mitogen-activated protein kinases) and ERK kinases MAP2K1/MEK1 and MAP2K2/MEK2. Activation occurs through phosphorylation of Ser-218 and Ser-222. MAP2K1/MEK1 binds KSR1 or KSR2 releasing the inhibitory intramolecular interaction between KSR1 or KSR2 protein kinase and N-terminal domains. This allows KSR1 or KSR2 dimerization with BRAF leading to BRAF activation and phosphorylation of MAP2K1. MAP2K1/MEK1 is also the target of negative feed-back regulation by its substrate kinases, such as MAPK1/ERK2. These phosphorylate MAP2K1/MEK1 on Thr-292, thereby facilitating dephosphorylation of the activating residues Ser-218 and Ser-222. Inhibited by serine/threonine phosphatase 2A. Many inhibitors have been identified including pyrrole derivatives, TAK-733 (one of a series of 8-methylpyrido[2,3-d]pyrimidine-4,7(3H,8H)-dione derivatives), CH4987655 and RDEA119/BAY 869766. In terms of biological role, dual specificity protein kinase which acts as an essential component of the MAP kinase signal transduction pathway. Binding of extracellular ligands such as growth factors, cytokines and hormones to their cell-surface receptors activates RAS and this initiates RAF1 activation. RAF1 then further activates the dual-specificity protein kinases MAP2K1/MEK1 and MAP2K2/MEK2. Both MAP2K1/MEK1 and MAP2K2/MEK2 function specifically in the MAPK/ERK cascade, and catalyze the concomitant phosphorylation of a threonine and a tyrosine residue in a Thr-Glu-Tyr sequence located in the extracellular signal-regulated kinases MAPK3/ERK1 and MAPK1/ERK2, leading to their activation and further transduction of the signal within the MAPK/ERK cascade. Activates BRAF in a KSR1 or KSR2-dependent manner; by binding to KSR1 or KSR2 releases the inhibitory intramolecular interaction between KSR1 or KSR2 protein kinase and N-terminal domains which promotes KSR1 or KSR2-BRAF dimerization and BRAF activation. Depending on the cellular context, this pathway mediates diverse biological functions such as cell growth, adhesion, survival and differentiation, predominantly through the regulation of transcription, metabolism and cytoskeletal rearrangements. One target of the MAPK/ERK cascade is peroxisome proliferator-activated receptor gamma (PPARG), a nuclear receptor that promotes differentiation and apoptosis. MAP2K1/MEK1 has been shown to export PPARG from the nucleus. The MAPK/ERK cascade is also involved in the regulation of endosomal dynamics, including lysosome processing and endosome cycling through the perinuclear recycling compartment (PNRC), as well as in the fragmentation of the Golgi apparatus during mitosis. The polypeptide is Dual specificity mitogen-activated protein kinase kinase 1 (Homo sapiens (Human)).